A 127-amino-acid polypeptide reads, in one-letter code: Chondrosarcoma-associated gene 2/3 protein (127 aa).

Residues 68–127 (MSRKPRASSPLSNNHPPTPKRRGSGRHPLNPGPEALSKFPRQPGREKGPIKEVPGTKGSP) are disordered.

In terms of tissue distribution, weakly expressed in kidney. Expressed in various tumor cell lines including carcinomas, myeloid and lymphoid malignancies, melanomas and prostate cancer. Overexpressed in taxol-resistant breast cancer line MDA 435TR and the doxorubicin-resistant multiple myelanoma lines RPMI-8226/Dox40 and RPMI-8226/MDR10V.

In terms of biological role, drug-resistance related protein, its expression is associated with the chemotherapy resistant and neoplastic phenotype. May also be linked to the malignant phenotype. This is Chondrosarcoma-associated gene 2/3 protein (CSAG2) from Homo sapiens (Human).